Here is a 309-residue protein sequence, read N- to C-terminus: Ankyrin repeat protein VACWR203 (309 aa).

5 ANK repeats span residues 13–44 (SVFK…SLTI), 110–142 (KYGT…DINA), 160–189 (FVYH…DLTI), 197–231 (PVVY…RASH), and 269–298 (EGRT…DIVV).

This sequence belongs to the orthopoxviruses VACWR203 protein family.

This Bos taurus (Bovine) protein is Ankyrin repeat protein VACWR203.